We begin with the raw amino-acid sequence, 544 residues long: uncharacterized protein (544 aa).

An N-terminal signal peptide occupies residues 1 to 34; it reads MIARRMLCARPWGPSCVVCALCGALAALVPAVGA. The interval 38 to 69 is disordered; sequence AVPAPGTPAPPAHTASEAVPPAPEPRAEGEQP.

Belongs to the TP096X family.

This is an uncharacterized protein from Treponema pallidum (strain Nichols).